Consider the following 326-residue polypeptide: Mitochondrial glycine transporter (326 aa).

3 Solcar repeats span residues 45 to 134, 141 to 225, and 237 to 321; these read HPVI…SKQY, PTAL…TRTA, and LIPL…MMAR. 6 consecutive transmembrane segments (helical) span residues 51 to 76, 109 to 135, 147 to 172, 200 to 223, 241 to 267, and 296 to 314; these read FLCG…TRLQ, GMSP…KQYF, VILG…TRYE, GLTA…SQTR, INFS…KTHM, and GSVP…AWTV.

The protein belongs to the mitochondrial carrier (TC 2.A.29) family. SLC25A38 subfamily.

The protein resides in the mitochondrion inner membrane. The catalysed reaction is glycine(in) = glycine(out). Functionally, mitochondrial glycine transporter that imports glycine into the mitochondrial matrix. Plays an important role in providing glycine for the first enzymatic step in heme biosynthesis, the condensation of glycine with succinyl-CoA to produce 5-aminolevulinate (ALA) in the mitochondrial matrix. Required during erythropoiesis. Plays a role as pro-apoptotic protein that induces caspase-dependent apoptosis. In Mus musculus (Mouse), this protein is Mitochondrial glycine transporter.